Reading from the N-terminus, the 351-residue chain is Tryptophan--tRNA ligase (351 aa).

ATP-binding positions include 11–13 (RPT) and 19–20 (GH). Positions 12–20 (PTGALHLGH) match the 'HIGH' region motif. Aspartate 139 serves as a coordination point for L-tryptophan. Residues 151-153 (GRD), leucine 190, and 198-202 (KMSKS) contribute to the ATP site. The 'KMSKS' region signature appears at 198–202 (KMSKS).

It belongs to the class-I aminoacyl-tRNA synthetase family. Homodimer.

The protein resides in the cytoplasm. The catalysed reaction is tRNA(Trp) + L-tryptophan + ATP = L-tryptophyl-tRNA(Trp) + AMP + diphosphate + H(+). Catalyzes the attachment of tryptophan to tRNA(Trp). This chain is Tryptophan--tRNA ligase, found in Borreliella burgdorferi (strain ATCC 35210 / DSM 4680 / CIP 102532 / B31) (Borrelia burgdorferi).